Consider the following 241-residue polypeptide: Carboxy-S-adenosyl-L-methionine synthase (241 aa).

S-adenosyl-L-methionine is bound by residues tyrosine 38, 63–65 (GCS), 88–89 (DN), 116–117 (DI), asparagine 131, and arginine 198.

It belongs to the class I-like SAM-binding methyltransferase superfamily. Cx-SAM synthase family. Homodimer.

It catalyses the reaction prephenate + S-adenosyl-L-methionine = carboxy-S-adenosyl-L-methionine + 3-phenylpyruvate + H2O. Its function is as follows. Catalyzes the conversion of S-adenosyl-L-methionine (SAM) to carboxy-S-adenosyl-L-methionine (Cx-SAM). The sequence is that of Carboxy-S-adenosyl-L-methionine synthase from Pseudoalteromonas translucida (strain TAC 125).